Consider the following 291-residue polypeptide: 33 kDa chaperonin (291 aa).

2 disulfides stabilise this stretch: C235/C237 and C268/C271.

It belongs to the HSP33 family. Under oxidizing conditions two disulfide bonds are formed involving the reactive cysteines. Under reducing conditions zinc is bound to the reactive cysteines and the protein is inactive.

Its subcellular location is the cytoplasm. Its function is as follows. Redox regulated molecular chaperone. Protects both thermally unfolding and oxidatively damaged proteins from irreversible aggregation. Plays an important role in the bacterial defense system toward oxidative stress. The sequence is that of 33 kDa chaperonin from Bacillus velezensis (strain DSM 23117 / BGSC 10A6 / LMG 26770 / FZB42) (Bacillus amyloliquefaciens subsp. plantarum).